Reading from the N-terminus, the 186-residue chain is Peptidyl-tRNA hydrolase (186 aa).

Tyr-13 serves as a coordination point for tRNA. His-18 (proton acceptor) is an active-site residue. Residues Tyr-59, Asn-61, and Asn-107 each coordinate tRNA.

It belongs to the PTH family. Monomer.

The protein localises to the cytoplasm. The catalysed reaction is an N-acyl-L-alpha-aminoacyl-tRNA + H2O = an N-acyl-L-amino acid + a tRNA + H(+). Its function is as follows. Hydrolyzes ribosome-free peptidyl-tRNAs (with 1 or more amino acids incorporated), which drop off the ribosome during protein synthesis, or as a result of ribosome stalling. Catalyzes the release of premature peptidyl moieties from peptidyl-tRNA molecules trapped in stalled 50S ribosomal subunits, and thus maintains levels of free tRNAs and 50S ribosomes. The sequence is that of Peptidyl-tRNA hydrolase from Thermotoga petrophila (strain ATCC BAA-488 / DSM 13995 / JCM 10881 / RKU-1).